The following is a 1353-amino-acid chain: Spike glycoprotein (1353 aa).

The signal sequence occupies residues 1-17 (MIHSVFLLMFLLTPTES). A BetaCoV S1-NTD domain is found at 18 to 351 (YVDVGPDSVK…NDLSQLHCSY (334 aa)). Over 18 to 1296 (YVDVGPDSVK…GNYTYYNKWP (1279 aa)) the chain is Extracellular. N-linked (GlcNAc...) asparagine; by host glycosylation is found at N66, N104, N125, N155, N166, N222, N236, and N244. A disulfide bridge connects residues C185 and C237. 2 disulfides stabilise this stretch: C339/C349 and C383/C407. Residues 381-587 (VECDFSPLLS…GTDTNSVCPK (207 aa)) form the BetaCoV S1-CTD domain. A glycan (N-linked (GlcNAc...) asparagine; by host) is linked at N410. Disulfide bonds link C425–C478 and C437–C585. Residues N487, N592, N619, N719, N774, N785, and N870 are each glycosylated (N-linked (GlcNAc...) asparagine; by host). 2 fusion peptide regions span residues 888–909 (SAIE…MQGY) and 907–929 (QGYD…AQYV). A disulfide bridge connects residues C912 and C925. The heptad repeat 1 stretch occupies residues 994 to 1044 (QKLIANKFNQALGAMQTGFTTTNEAFHKVQDAVNNNAQALSKLASELSNTF). The stretch at 1023–1067 (QDAVNNNAQALSKLASELSNTFGAISASIGDIIQRLDVLEQDAQI) forms a coiled coil. Residues N1176, N1213, N1225, N1241, N1256, N1277, and N1288 are each glycosylated (N-linked (GlcNAc...) asparagine; by host). Residues 1246-1285 (IPNFGSLTQINTTLLDLTYEMLSLQQVVKALNESYIDLKE) form a heptad repeat 2 region. Residues 1258 to 1286 (TLLDLTYEMLSLQQVVKALNESYIDLKEL) are a coiled coil. The chain crosses the membrane as a helical span at residues 1297–1317 (WYIWLGFIAGLVALALCVFFI). Over 1318–1353 (LCCTGCGTNCMGKLKCNRCCDRYEEYDLEPHKVHVH) the chain is Cytoplasmic. The KxHxx motif lies at 1351–1353 (HVH).

This sequence belongs to the betacoronaviruses spike protein family. Homotrimer; each monomer consists of a S1 and a S2 subunit. The resulting peplomers protrude from the virus surface as spikes. S1 interacts with murine DPP4. Post-translationally, specific enzymatic cleavages in vivo yield mature proteins. The precursor is processed into S1 and S2 by host cell furin or another cellular protease to yield the mature S1 and S2 proteins. Additionally, a second cleavage leads to the release of a fusion peptide after viral attachment to host cell receptor. The cytoplasmic Cys-rich domain is palmitoylated. Spike glycoprotein is digested within host endosomes.

It localises to the virion membrane. Its subcellular location is the host endoplasmic reticulum-Golgi intermediate compartment membrane. The protein localises to the host cell membrane. Attaches the virion to the cell membrane by interacting with host receptor, initiating the infection. Interacts with host DPP4 to mediate virla entry. In terms of biological role, mediates fusion of the virion and cellular membranes by acting as a class I viral fusion protein. Under the current model, the protein has at least three conformational states: pre-fusion native state, pre-hairpin intermediate state, and post-fusion hairpin state. During viral and target cell membrane fusion, the coiled coil regions (heptad repeats) assume a trimer-of-hairpins structure, positioning the fusion peptide in close proximity to the C-terminal region of the ectodomain. The formation of this structure appears to drive apposition and subsequent fusion of viral and target cell membranes. Functionally, acts as a viral fusion peptide which is unmasked following S2 cleavage occurring upon virus endocytosis. The protein is Spike glycoprotein of Middle East respiratory syndrome-related coronavirus (isolate United Kingdom/H123990006/2012) (MERS-CoV).